Reading from the N-terminus, the 489-residue chain is Glutamyl-tRNA(Gln) amidotransferase subunit A (489 aa).

Residues Lys-79 and Ser-158 each act as charge relay system in the active site. Ser-182 serves as the catalytic Acyl-ester intermediate.

It belongs to the amidase family. GatA subfamily. As to quaternary structure, heterotrimer of A, B and C subunits.

The enzyme catalyses L-glutamyl-tRNA(Gln) + L-glutamine + ATP + H2O = L-glutaminyl-tRNA(Gln) + L-glutamate + ADP + phosphate + H(+). In terms of biological role, allows the formation of correctly charged Gln-tRNA(Gln) through the transamidation of misacylated Glu-tRNA(Gln) in organisms which lack glutaminyl-tRNA synthetase. The reaction takes place in the presence of glutamine and ATP through an activated gamma-phospho-Glu-tRNA(Gln). The chain is Glutamyl-tRNA(Gln) amidotransferase subunit A from Anaplasma marginale (strain Florida).